The primary structure comprises 799 residues: Integrin beta-1 (799 aa).

The N-terminal stretch at 1–20 (MNLQLVFWIGLISLICSVFG) is a signal peptide. The Extracellular segment spans residues 21–729 (QTDKNRCLKA…ETPDCPTGPD (709 aa)). The PSI domain maps to 26 to 76 (RCLKANAKSCGECIQAGPNCGWCTNTTFLQEGMPTSARCDDLEALKKKGCH). 28 disulfide bridges follow: cysteine 27/cysteine 45, cysteine 35/cysteine 465, cysteine 38/cysteine 64, cysteine 48/cysteine 75, cysteine 207/cysteine 213, cysteine 261/cysteine 301, cysteine 401/cysteine 415, cysteine 435/cysteine 463, cysteine 467/cysteine 487, cysteine 478/cysteine 490, cysteine 492/cysteine 501, cysteine 503/cysteine 534, cysteine 517/cysteine 532, cysteine 526/cysteine 537, cysteine 539/cysteine 554, cysteine 556/cysteine 577, cysteine 561/cysteine 575, cysteine 569/cysteine 580, cysteine 582/cysteine 591, cysteine 593/cysteine 616, cysteine 600/cysteine 614, cysteine 608/cysteine 619, cysteine 621/cysteine 631, cysteine 634/cysteine 637, cysteine 641/cysteine 692, cysteine 647/cysteine 666, cysteine 650/cysteine 662, and cysteine 700/cysteine 724. N-linked (GlcNAc...) asparagine glycosylation is found at asparagine 50, asparagine 94, and asparagine 97. A VWFA domain is found at 140 to 378 (DYPIDLYYLM…QLIIDAYNSL (239 aa)). Serine 152 and serine 154 together coordinate Mg(2+). Ca(2+) is bound by residues serine 154, aspartate 157, aspartate 158, and glutamate 189. The segment at 207 to 213 (CTSEQNC) is CX3CL1-binding. Asparagine 212 carries an N-linked (GlcNAc...) asparagine glycan. The Ca(2+) site is built by asparagine 244, aspartate 246, proline 248, and glutamate 249. Residue glutamate 249 coordinates Mg(2+). The N-linked (GlcNAc...) asparagine glycan is linked to asparagine 269. Residues 295–314 (LPNDGQCHLENNVYTMSHYY) form a CX3CL1-binding region. A Ca(2+)-binding site is contributed by glycine 362. Asparagine 363, asparagine 406, and asparagine 417 each carry an N-linked (GlcNAc...) asparagine glycan. Residues 383–466 (ILENSKLPDG…VVLQFICKCN (84 aa)) are interaction with TMEM182. I-EGF domains lie at 467–502 (CQSH…RHCE), 503–555 (CSTD…KFCE), 556–592 (CDNF…SACD), and 593–632 (CSLD…PTCE). The N-linked (GlcNAc...) asparagine glycan is linked to asparagine 482. The N-linked (GlcNAc...) asparagine glycan is linked to asparagine 521. Asparagine 585 carries an N-linked (GlcNAc...) asparagine glycan. Asparagine 670 carries N-linked (GlcNAc...) asparagine glycosylation. Residues 730–752 (IIPIVAGVVAGIVLIGLALLLIW) traverse the membrane as a helical segment. At 753–799 (KLLMIIHDRREFAKFEKEKMNAKWDTGENPIYKSAVTTVVNPKYEGK) the chain is on the cytoplasmic side. A signal for sorting from recycling endosomes; interaction with ACAP1 region spans residues 763–768 (EFAKFE). Threonine 778 is subject to Phosphothreonine. Residue tyrosine 784 is modified to Phosphotyrosine. A Phosphoserine modification is found at serine 786. The interaction with ITGB1BP1 stretch occupies residues 786-793 (SAVTTVVN). The residue at position 790 (threonine 790) is a Phosphothreonine. Lysine 795 carries the N6-acetyllysine; alternate modification. Lysine 795 participates in a covalent cross-link: Glycyl lysine isopeptide (Lys-Gly) (interchain with G-Cter in SUMO1); alternate.

Belongs to the integrin beta chain family. In terms of assembly, interacts with seprase FAP (seprase); the interaction occurs at the cell surface of invadopodia membrane in a collagen-dependent manner. Heterodimer of an alpha and a beta subunit. Beta-1 associates with either alpha-1, alpha-2, alpha-3, alpha-4, alpha-5, alpha-6, alpha-7, alpha-8, alpha-9, alpha-10, alpha-11 or alpha-V. ITGA6:ITGB1 is found in a complex with CD9; interaction takes place in oocytes and is involved in sperm-egg fusion. Binds LGALS3BP and NMRK2, when associated with alpha-7, but not with alpha-5. Interacts with FLNA, FLNB, FLNC and RANBP9. Interacts with KRT1 in the presence of RACK1 and SRC. Interacts with JAML; integrin alpha-4/beta-1 may regulate leukocyte to endothelial cells adhesion by controlling JAML homodimerization. Interacts with RAB21. Interacts (via the cytoplasmic region) with RAB25 (via the hypervariable C-terminal region). Interacts with MYO10. Interacts with ITGB1BP1 (via C-terminal region); the interaction is a prerequisite for focal adhesion disassembly. Interacts with TLN1; the interaction is prevented by competitive binding of ITGB1BP1. Interacts with ACAP1; required for ITGB1 recycling. Interacts with ASAP3. Interacts with FERMT2; the interaction is inhibited in presence of ITGB1BP1. Interacts with DAB2. Interacts with FGR and HCK. Interacts with alpha-7A and alpha-7B in adult skeletal muscle. Interacts with alpha-7B in cardiomyocytes of adult heart. Interacts with EMP2; the interaction may be direct or indirect and ITGB1 has a heterodimer form. ITGA5:ITGB1 interacts with CCN3. ITGA4:ITGB1 is found in a ternary complex with CX3CR1 and CX3CL1. ITGA5:ITGB1 interacts with FBN1. ITGA5:ITGB1 acts as a receptor for fibronectin FN1 and mediates R-G-D-dependent cell adhesion to FN1. ITGA5:ITGB1 interacts with IL1B. Interacts with MDK. ITGA4:ITGB1 interacts with MDK; this interaction mediates MDK-induced osteoblast cells migration through PXN phosphorylation. ITGA6:ITGB1 interacts with MDK; this interaction mediates MDK-induced neurite-outgrowth. ITGA5:ITGB1 interacts with ACE2. Interacts with TMEM182 and LAMB1. Interacts with tensin TNS3; TNS3 also interacts with PEAK1, thus acting as an adapter molecule to bridge the association of PEAK1 with ITGB1. Interacts with tensin TNS4; the interaction displaces tensin TNS3 from the ITGB1 cytoplasmic tail and promotes ITGB1 stability. Integrin ITGA9:ITGB1 interacts with SPP1/OPN (via N-terminus). Integrin ITGA9:ITGB1 interacts with TNC/TNFN3 (via the 3rd Fibronectin type-III domain). Integrins ITGA4:ITGB1 and ITGA9:ITGB1 interact with SVEP1 (via Sushi domain 21); thereby inhibit Ca(2+) intracellular signaling and as a result repress vasocontraction. ITGA4:ITGB1 and ITGA5:ITGB1 interacts with SELP. ITGA5:ITGB1 interacts with IGFBP1. ITGA4:ITGB1 interacts with BCAM. Interacts with ADGRG6.

It localises to the cell membrane. The protein resides in the cell projection. The protein localises to the invadopodium membrane. Its subcellular location is the ruffle membrane. It is found in the recycling endosome. It localises to the melanosome. The protein resides in the lamellipodium. The protein localises to the ruffle. Its subcellular location is the cell junction. It is found in the focal adhesion. Integrins alpha-1/beta-1, alpha-2/beta-1, alpha-10/beta-1 and alpha-11/beta-1 are receptors for collagen. Integrins alpha-1/beta-1 and alpha-2/beta-2 recognize the proline-hydroxylated sequence G-F-P-G-E-R in collagen. Integrins alpha-2/beta-1, alpha-3/beta-1, alpha-4/beta-1, alpha-5/beta-1, alpha-8/beta-1, alpha-10/beta-1, alpha-11/beta-1 and alpha-V/beta-1 are receptors for fibronectin. Alpha-4/beta-1 recognizes one or more domains within the alternatively spliced CS-1 and CS-5 regions of fibronectin. Integrin alpha-5/beta-1 is a receptor for fibrinogen. Integrin alpha-1/beta-1, alpha-2/beta-1, alpha-6/beta-1 and alpha-7/beta-1 are receptors for lamimin. Integrin alpha-6/beta-1 (ITGA6:ITGB1) is present in oocytes and is involved in sperm-egg fusion. Integrin alpha-4/beta-1 is a receptor for VCAM1 and recognizes the sequence Q-I-D-S in VCAM1. Integrin alpha-9/beta-1 is a receptor for VCAM1, cytotactin and osteopontin. It recognizes the sequence A-E-I-D-G-I-E-L in cytotactin. Integrin alpha-3/beta-1 is a receptor for epiligrin, thrombospondin and CSPG4. Integrin alpha-3/beta-1 provides a docking site for FAP (seprase) at invadopodia plasma membranes in a collagen-dependent manner and hence may participate in the adhesion, formation of invadopodia and matrix degradation processes, promoting cell invasion. Alpha-3/beta-1 may mediate with LGALS3 the stimulation by CSPG4 of endothelial cells migration. Integrin alpha-V/beta-1 is a receptor for vitronectin. Beta-1 integrins recognize the sequence R-G-D in a wide array of ligands. When associated with alpha-7/beta-1 integrin, regulates cell adhesion and laminin matrix deposition. Involved in promoting endothelial cell motility and angiogenesis. Involved in osteoblast compaction through the fibronectin fibrillogenesis cell-mediated matrix assembly process and the formation of mineralized bone nodules. May be involved in up-regulation of the activity of kinases such as PKC via binding to KRT1. Together with KRT1 and RACK1, serves as a platform for SRC activation or inactivation. Plays a mechanistic adhesive role during telophase, required for the successful completion of cytokinesis. ITGA4:ITGB1 binds to fractalkine (CX3CL1) and may act as its coreceptor in CX3CR1-dependent fractalkine signaling. ITGA4:ITGB1 and ITGA5:ITGB1 bind to PLA2G2A via a site (site 2) which is distinct from the classical ligand-binding site (site 1) and this induces integrin conformational changes and enhanced ligand binding to site 1. ITGA5:ITGB1 acts as a receptor for fibrillin-1 (FBN1) and mediates R-G-D-dependent cell adhesion to FBN1. ITGA5:ITGB1 is a receptor for IL1B and binding is essential for IL1B signaling. ITGA5:ITGB3 is a receptor for soluble CD40LG and is required for CD40/CD40LG signaling. Plays an important role in myoblast differentiation and fusion during skeletal myogenesis. ITGA9:ITGB1 may play a crucial role in SVEP1/polydom-mediated myoblast cell adhesion. Integrins ITGA9:ITGB1 and ITGA4:ITGB1 repress PRKCA-mediated L-type voltage-gated channel Ca(2+) influx and ROCK-mediated calcium sensitivity in vascular smooth muscle cells via their interaction with SVEP1, thereby inhibit vasocontraction. The polypeptide is Integrin beta-1 (Itgb1) (Rattus norvegicus (Rat)).